Here is a 575-residue protein sequence, read N- to C-terminus: Alpha-(1,6)-fucosyltransferase (575 aa).

The Cytoplasmic portion of the chain corresponds to 1-9 (MRPWTGSWR). The helical; Signal-anchor for type II membrane protein transmembrane segment at 10 to 30 (WIMLILFAWGTLLFYIGGHLV) threads the bilayer. Topologically, residues 31-575 (RDNDHPDHSS…KYPTYPEAEK (545 aa)) are lumenal. Cystine bridges form between cysteine 204–cysteine 266, cysteine 212–cysteine 230, and cysteine 218–cysteine 222. The GT23 domain maps to 206-493 (KAKKLVCNIN…PDASANFHSL (288 aa)). Serine 278 carries the phosphoserine modification. The short motif at 299–305 (PRPPYLP) is the SH3-binding element. Residues 365–366 (RR) are important for donor substrate binding. Cysteine 465 and cysteine 472 are disulfide-bonded. Residues 502-563 (QNAHNQIAIY…PSYKVREKIE (62 aa)) enclose the SH3 domain.

Belongs to the glycosyltransferase 23 family. In terms of processing, tyrosine phosphorylated by PKDCC/VLK.

The protein localises to the golgi apparatus. The protein resides in the golgi stack membrane. It catalyses the reaction N(4)-{beta-D-GlcNAc-(1-&gt;2)-alpha-D-Man-(1-&gt;3)-[beta-D-GlcNAc-(1-&gt;2)-alpha-D-Man-(1-&gt;6)]-beta-D-Man-(1-&gt;4)-beta-D-GlcNAc-(1-&gt;4)-beta-D-GlcNAc}-L-asparaginyl-[protein] + GDP-beta-L-fucose = an N(4)-{beta-D-GlcNAc-(1-&gt;2)-alpha-D-Man-(1-&gt;3)-[beta-D-GlcNAc-(1-&gt;2)-alpha-D-Man-(1-&gt;6)]-beta-D-Man-(1-&gt;4)-beta-D-GlcNAc-(1-&gt;4)-[alpha-L-Fuc-(1-&gt;6)]-beta-D-GlcNAc}-L-asparaginyl-[protein] + GDP + H(+). It functions in the pathway protein modification; protein glycosylation. Catalyzes the addition of fucose in alpha 1-6 linkage to the first GlcNAc residue, next to the peptide chains in N-glycans. This is Alpha-(1,6)-fucosyltransferase (FUT8) from Canis lupus familiaris (Dog).